A 652-amino-acid polypeptide reads, in one-letter code: Apicoplast pyruvate carrier 2 (652 aa).

The Cytoplasmic segment spans residues 1–45 (MSAFPASPQPSAFPASPQPSAFPASPQPSASPVSPRHCVSPSSGT). The interval 1-53 (MSAFPASPQPSAFPASPQPSAFPASPQPSASPVSPRHCVSPSSGTLPSSSSPS) is disordered. 12 consecutive transmembrane segments (helical) span residues 46–66 (LPSS…SSSS), 126–146 (NLLP…AVSY), 167–187 (GTTL…SAWM), 189–209 (LGLA…IAYG), 212–232 (TALG…KLSP), 278–298 (LPYL…SSLN), 345–365 (LVDP…AERQ), 385–405 (SCSA…ICSS), 417–437 (LSWQ…LYPE), 445–465 (AAPA…PRAL), 467–487 (SASR…SLTG), and 515–535 (LWGY…MNAL). The Cytoplasmic portion of the chain corresponds to 536–652 (TAPCLFALST…LPYRFPTYSP (117 aa)).

The protein belongs to the major facilitator superfamily. In terms of assembly, interacts with apicoplast pyruvate carrier 1.

It is found in the plastid. The protein localises to the apicoplast. The protein resides in the membrane. In terms of biological role, along with apicoplast pyruvate carrier 1, forms apicoplast pyruvate carrier (APC) complex, which transports pyruvate into the apicoplast and may also transport amino acids like methionine, serine, glycine and tryptophan with low efficiency. Required for maintaining pyruvate-dependent metabolic activities in the apicoplast, such as synthesis of fatty acids, isopentenyl pyrophosphate (IPP), dimethylallyl pyrophosphate (DMAPP) and methylerythritol 4-phosphate (MEP). Required for maintaining the integrity of the apicoplast. Required for normal parasite growth. This Toxoplasma gondii protein is Apicoplast pyruvate carrier 2.